The sequence spans 200 residues: MTSKIAQLQALLYVAGDGGIKKEQLRDLLQLADPEIESLAKRLQEKLASDLDCGLQLLEINDEYKLTTSGEVSDLVEAYFNKDLTKNISQSALEILAIVAYRQPITRIEIDEIRGVNSSGALQTLVWRGLVKAQGVKDAPGHPKLYVTTDYFLQYFGYKSLADLPVIENFEDSSFDADGQVDLFAENGTADEAFHKMEDL.

The protein belongs to the ScpB family. As to quaternary structure, homodimer. Homodimerization may be required to stabilize the binding of ScpA to the Smc head domains. Component of a cohesin-like complex composed of ScpA, ScpB and the Smc homodimer, in which ScpA and ScpB bind to the head domain of Smc. The presence of the three proteins is required for the association of the complex with DNA.

Its subcellular location is the cytoplasm. Functionally, participates in chromosomal partition during cell division. May act via the formation of a condensin-like complex containing Smc and ScpA that pull DNA away from mid-cell into both cell halves. The chain is Segregation and condensation protein B from Lactobacillus delbrueckii subsp. bulgaricus (strain ATCC 11842 / DSM 20081 / BCRC 10696 / JCM 1002 / NBRC 13953 / NCIMB 11778 / NCTC 12712 / WDCM 00102 / Lb 14).